Here is a 213-residue protein sequence, read N- to C-terminus: Imidazole glycerol phosphate synthase subunit HisH (213 aa).

The Glutamine amidotransferase type-1 domain maps to 4 to 213 (SIAIVDYGMG…LYRNFVHWKP (210 aa)). Cysteine 83 functions as the Nucleophile in the catalytic mechanism. Residues histidine 193 and glutamate 195 contribute to the active site.

In terms of assembly, heterodimer of HisH and HisF.

The protein resides in the cytoplasm. The catalysed reaction is 5-[(5-phospho-1-deoxy-D-ribulos-1-ylimino)methylamino]-1-(5-phospho-beta-D-ribosyl)imidazole-4-carboxamide + L-glutamine = D-erythro-1-(imidazol-4-yl)glycerol 3-phosphate + 5-amino-1-(5-phospho-beta-D-ribosyl)imidazole-4-carboxamide + L-glutamate + H(+). The enzyme catalyses L-glutamine + H2O = L-glutamate + NH4(+). It functions in the pathway amino-acid biosynthesis; L-histidine biosynthesis; L-histidine from 5-phospho-alpha-D-ribose 1-diphosphate: step 5/9. Its function is as follows. IGPS catalyzes the conversion of PRFAR and glutamine to IGP, AICAR and glutamate. The HisH subunit catalyzes the hydrolysis of glutamine to glutamate and ammonia as part of the synthesis of IGP and AICAR. The resulting ammonia molecule is channeled to the active site of HisF. The chain is Imidazole glycerol phosphate synthase subunit HisH from Burkholderia multivorans (strain ATCC 17616 / 249).